A 227-amino-acid chain; its full sequence is MKMSNKKRNADKKPLMYIVQPDYAETTRSSMQEIVIKRKADKPAPPKAEEKPAYHEKQQEEAVAQDVLQEDQKPAAEPVSQQTQEAREPENIKSQEEQKAEPQAVEETVEHEPPKAEKKEEPALEARKPEKEPEAVHSADKAEEKAPPARKVKKPMSKMTIHEKIDFLTKLPHNMPRALCLIEANGRTYRGVIVGRRNDSVLLRTTGNGAPTELAIDDITSLHPLGF.

Over residues 1 to 10 (MKMSNKKRNA) the composition is skewed to basic residues. The disordered stretch occupies residues 1–157 (MKMSNKKRNA…PARKVKKPMS (157 aa)). Basic and acidic residues-rich tracts occupy residues 35-60 (VIKR…KQQE), 85-100 (EARE…EQKA), and 108-147 (TVEH…EKAP).

The protein localises to the spore coat. Its function is as follows. Has an important morphogenetic role. Involved in the assembly of at least five coat proteins, including CotB, CotG, CotS, CotSA and CotW. Required for appearance of a morphologically normal outer coat. To a large degree, CotO and CotH act at a late stage of coat assembly from within the outer coat to direct maturation of this structure. The protein is Spore coat protein O (cotO) of Bacillus subtilis (strain 168).